Consider the following 307-residue polypeptide: Putative serine/threonine-protein phosphatase C22H10.04 (307 aa).

Residues Asp-51, His-53, Asp-79, and Asn-111 each contribute to the Mn(2+) site. The active-site Proton donor is the His-112. Positions 161 and 236 each coordinate Mn(2+).

It belongs to the PPP phosphatase family. PP-X subfamily. Requires Mn(2+) as cofactor.

The enzyme catalyses O-phospho-L-seryl-[protein] + H2O = L-seryl-[protein] + phosphate. It carries out the reaction O-phospho-L-threonyl-[protein] + H2O = L-threonyl-[protein] + phosphate. The sequence is that of Putative serine/threonine-protein phosphatase C22H10.04 from Schizosaccharomyces pombe (strain 972 / ATCC 24843) (Fission yeast).